An 846-amino-acid polypeptide reads, in one-letter code: Major vault protein beta (846 aa).

The residue at position 2 (alanine 2) is an N-acetylalanine. MVP repeat units lie at residues 2-60 (ATPV…IPPR), 61-115 (QYCI…QPVP), 116-172 (LQVI…EPVR), 173-225 (AVII…GFIQ), 226-280 (ALVL…RDIK), 281-332 (AITL…IQNV), 333-388 (NVLS…RRKR), 389-458 (IPLD…STKV), and 459-521 (ITYR…FLGP).

As to quaternary structure, the vault ribonucleoprotein particle is a huge (400 A x 670 A) cage structure of 12.9 MDa. It consists of a dimer of half-vaults, with each half-vault comprising 39 identical major vault protein (MVP) chains. Dictyostelium is one of the few organisms in which the major component is actually two proteins (alpha and beta).

The protein localises to the cytoplasm. It localises to the nucleus. Functionally, unknown, though MVP-beta is required for normal vault structure. The protein is Major vault protein beta (mvpB) of Dictyostelium discoideum (Social amoeba).